A 195-amino-acid chain; its full sequence is Calcineurin B homologous protein 1 (195 aa).

A lipid anchor (N-myristoyl glycine) is attached at Gly2. EF-hand domains follow at residues 26–61, 66–101, 110–145, and 151–186; these read SQITRLYSRFTSLDKGENGTLSREDFQRIPELAINP, IINAFFSEGEDQVNFRGFMRTLAHFRPIEDNEKSKD, SRSNKLHFAFRLYDLDKDDKISRDELLQVLRMMVGV, and QLGSIADRTIQEADQDGDCAISFAEFVKVLEKVDVE. Ca(2+) contacts are provided by Asp123, Asp125, Asp127, Lys129, Glu134, Asp164, Asp166, Asp168, and Glu175.

It belongs to the calcineurin regulatory subunit family. CHP subfamily. In terms of assembly, monomer. Phosphorylated. Post-translationally, calcium-binding or N-myristoylation are necessary for the Na(+)/H(+) exchange activities.

The protein localises to the nucleus. It localises to the cytoplasm. It is found in the cytoskeleton. Its subcellular location is the endomembrane system. The protein resides in the endoplasmic reticulum-Golgi intermediate compartment. The protein localises to the endoplasmic reticulum. It localises to the cell membrane. It is found in the membrane. Calcium-binding protein involved in different processes such as regulation of vesicular trafficking, plasma membrane Na(+)/H(+) exchanger and gene transcription. Involved in the constitutive exocytic membrane traffic. Mediates the association between microtubules and membrane-bound organelles of the endoplasmic reticulum and Golgi apparatus and is also required for the targeting and fusion of transcytotic vesicles (TCV) with the plasma membrane. Functions as an integral cofactor in cell pH regulation by controlling plasma membrane-type Na(+)/H(+) exchange activity. Inhibits serum- and GTPase-stimulated Na(+)/H(+) exchange. Plays a role as an inhibitor of ribosomal RNA transcription. Acts as a negative regulator of the calcineurin/NFAT signaling pathway. The polypeptide is Calcineurin B homologous protein 1 (CHP1) (Gallus gallus (Chicken)).